A 312-amino-acid chain; its full sequence is Glutaminase (312 aa).

Substrate-binding residues include Ser67, Asn118, Glu162, Asn169, Tyr193, Tyr245, and Val263.

Belongs to the glutaminase family. Homotetramer.

The enzyme catalyses L-glutamine + H2O = L-glutamate + NH4(+). The polypeptide is Glutaminase (Bordetella avium (strain 197N)).